Consider the following 365-residue polypeptide: Probable flavin mononucleotide-dependent alkene reductase (365 aa).

FMN is bound by residues 30-32 (PLT), Ala-63, and Gln-105. The Proton donor role is filled by Tyr-191. FMN contacts are provided by residues Arg-238, Ser-303, and 324–325 (GT).

The protein belongs to the NADH:flavin oxidoreductase/NADH oxidase family. In terms of assembly, monomer. FMN serves as cofactor.

It is found in the cytoplasm. The protein localises to the cytosol. Its function is as follows. May function as a flavin mononucleotide (FMN)-dependent alkene reductase on substrates carrying alpha,beta-unsaturated carbonyl groups (ketones, aldehydes, carboxylic acids, esters, lactones or cyclic imides). The catalysis depends on NAD(P)H, which acts as a hydride donor for the reduction. Seems to be involved in metabolic pathways required for efficient replication of amastigotes within macrophages. In terms of biological role, acts as a FMN-dependent nitroreductase that activates anti-leishmanial bicyclic nitroaromatic prodrugs including delamanid, DNDI-VL-2098 and (R)-PA-824, forming toxic products that kill the parasites. The protein is Probable flavin mononucleotide-dependent alkene reductase of Leishmania infantum.